Consider the following 377-residue polypeptide: Mitochondrial pyrimidine nucleotide transporter RIM2 (377 aa).

3 Solcar repeats span residues 50 to 163 (VKPW…TKDM), 173 to 262 (ETPM…MKRL), and 286 to 375 (KEWC…VIRL). 6 helical membrane passes run 53–73 (WVHFVAGGIGGMAGAVVTCPF), 131–151 (GFRSLFKGLGPNLVGVIPARS), 179–199 (LMAAATAGWATATATNPIWLI), 238–258 (GLSASYLGSVEGILQWLLYEQ), 286–306 (KEWCQRSGSAGLAKFVASIAT), and 347–368 (MYSGLTPHLMRTVPNSIIMFGT).

It belongs to the mitochondrial carrier (TC 2.A.29) family.

It localises to the mitochondrion inner membrane. The enzyme catalyses 5-methyl-UTP(out) + UTP(in) = 5-methyl-UTP(in) + UTP(out). Mitochondrial transporter that imports/exports pyrimidine nucleotides into and from mitochondria. Selectively transports uridine, thymidine, and cytosine (deoxy)nucleoside di- and triphosphates by an antiport mechanism. Also transports, with lower efficiency, uridine, thymidine, and cytosine (deoxy)nucleoside monophosphates as well as guanosine (deoxy)nucleoside di- and triphosphate. May import (deoxy)nucleoside triphosphates in exchange for intramitochondrial (deoxy)nucleoside monophosphates, thus providing precursors necessary for de novo synthesis of mitochondrial DNA and RNA while exporting products of their catabolism. Mediates the transport of iron and other divalent metal ions like copper and zinc across the mitochondrial inner membrane in a pyrimidine nucleotide-dependent fashion. Catalyzes the co-import of pyrimidine nucleotides and divalent metal ions including ferrous iron. Participates in mitochondrial genome maintenance, regulation of mitochondrial membrane potential and mitochondrial respiration. The polypeptide is Mitochondrial pyrimidine nucleotide transporter RIM2 (RIM2) (Saccharomyces cerevisiae (strain ATCC 204508 / S288c) (Baker's yeast)).